Consider the following 289-residue polypeptide: Cyclo(L-tyrosyl-L-tyrosyl) synthase (289 aa).

The interval 1 to 48 is disordered; it reads MSYVAAEPGVLISPTDDLQSPRSAPAAHDENADGITGGTRDDSAPNSR. Serine 88 serves as the catalytic Nucleophile. Substrate contacts are provided by residues asparagine 91, 229–233, and tyrosine 253; that span reads YICAE.

The protein belongs to the CDPS family. In terms of assembly, homodimer.

It catalyses the reaction 2 L-tyrosyl-tRNA(Tyr) = cyclo(L-tyrosyl-L-tyrosyl) + 2 tRNA(Tyr). Its function is as follows. Involved in the biosynthesis of mycocyclosin. It uses activated amino acids in the form of aminoacyl-tRNAs (aa-tRNAs) as substrates to catalyze the ATP-independent formation of cyclodipeptides which are intermediates in diketopiperazine (DKP) biosynthetic pathways. Catalyzes the formation of cyclo(L-Tyr-L-Tyr) (cYY) from L-tyrosyl-tRNA(Tyr). This chain is Cyclo(L-tyrosyl-L-tyrosyl) synthase, found in Mycobacterium tuberculosis (strain CDC 1551 / Oshkosh).